The chain runs to 346 residues: Partitioning defective 6 homolog alpha (346 aa).

Residues 1–116 are interaction with PRKCI and PRKCZ; it reads MARPQRTPAR…SNSLQRRKKG (116 aa). The region spanning 15 to 95 is the PB1 domain; sequence IVEVKSKFDA…PPLRLLVQKR (81 aa). The interval 126 to 253 is interaction with PARD3 and CDC42; that stretch reads RTRPPLLISL…VTVKPANQRN (128 aa). The region spanning 133 to 150 is the Pseudo-CRIB domain; the sequence is ISLPQDFRQVSSVIDVDL. The 94-residue stretch at 157-250 folds into the PDZ domain; the sequence is RVRLHKHGSD…NLIVTVKPAN (94 aa). 2 disordered regions span residues 257-294 and 317-346; these read RGAS…HPPC and GSSL…GFSL. Ser-278 bears the Phosphoserine mark. The segment covering 317–332 has biased composition (polar residues); it reads GSSLPSLDSREQANSG. Ser-345 bears the Phosphoserine mark.

It belongs to the PAR6 family. Interacts with PALS1 and CRB3. Interacts with PARD3. Interacts with GTP-bound forms of CDC42, RHOQ/TC10 and RAC1. Interacts with the N-terminal part of PRKCI and PRKCZ. Part of a complex with PARD3, CDC42 or RAC1 and PRKCI or PRKCZ. Part of a complex with LLGL1 and PRKCI. Interacts with MAP2K5. Interacts with TGFBR1; involved in TGF-beta induced epithelial to mesenchymal transition. Interacts with ECT2 ('Thr-359' phosphorylated form) and PRKCI. Interacts with DCTN1 and PCM1. In terms of processing, phosphorylated by the TGF-beta receptor. Ubiquitinated by the SCF(FBXO31) complex, leading to its proteasomal degradation.

It is found in the cytoplasm. It localises to the cell membrane. The protein localises to the cell junction. Its subcellular location is the tight junction. The protein resides in the cytoskeleton. It is found in the microtubule organizing center. It localises to the centrosome. The protein localises to the centriolar satellite. Its function is as follows. Adapter protein involved in asymmetrical cell division and cell polarization processes. Probably involved in the formation of epithelial tight junctions. Association with PARD3 may prevent the interaction of PARD3 with F11R/JAM1, thereby preventing tight junction assembly. The PARD6-PARD3 complex links GTP-bound Rho small GTPases to atypical protein kinase C proteins. Regulates centrosome organization and function. Essential for the centrosomal recruitment of key proteins that control centrosomal microtubule organization. This chain is Partitioning defective 6 homolog alpha (Pard6a), found in Rattus norvegicus (Rat).